A 196-amino-acid polypeptide reads, in one-letter code: Probable malonic semialdehyde reductase RutE (196 aa).

The protein belongs to the nitroreductase family. HadB/RutE subfamily. The cofactor is FMN.

It carries out the reaction 3-hydroxypropanoate + NADP(+) = 3-oxopropanoate + NADPH + H(+). May reduce toxic product malonic semialdehyde to 3-hydroxypropionic acid, which is excreted. This is Probable malonic semialdehyde reductase RutE from Shigella sonnei (strain Ss046).